The chain runs to 367 residues: tRNA/tmRNA (uracil-C(5))-methyltransferase (367 aa).

Positions 190, 218, 223, 239, and 299 each coordinate S-adenosyl-L-methionine. Cys324 serves as the catalytic Nucleophile. Catalysis depends on Glu358, which acts as the Proton acceptor.

This sequence belongs to the class I-like SAM-binding methyltransferase superfamily. RNA M5U methyltransferase family. TrmA subfamily.

It carries out the reaction uridine(54) in tRNA + S-adenosyl-L-methionine = 5-methyluridine(54) in tRNA + S-adenosyl-L-homocysteine + H(+). The enzyme catalyses uridine(341) in tmRNA + S-adenosyl-L-methionine = 5-methyluridine(341) in tmRNA + S-adenosyl-L-homocysteine + H(+). Its function is as follows. Dual-specificity methyltransferase that catalyzes the formation of 5-methyluridine at position 54 (m5U54) in all tRNAs, and that of position 341 (m5U341) in tmRNA (transfer-mRNA). This Musicola paradisiaca (strain Ech703) (Dickeya paradisiaca) protein is tRNA/tmRNA (uracil-C(5))-methyltransferase.